A 122-amino-acid chain; its full sequence is NADH-quinone oxidoreductase subunit A (122 aa).

Transmembrane regions (helical) follow at residues 10–30 (MIVLIFLLLGILLPVVALTLG), 66–86 (IFALLFVIFDVETLFLYPWAV), and 91–111 (LGLFALIEMLIFVVMLLVGLA).

The protein belongs to the complex I subunit 3 family. As to quaternary structure, NDH-1 is composed of 14 different subunits. Subunits NuoA, H, J, K, L, M, N constitute the membrane sector of the complex.

It is found in the cell membrane. The catalysed reaction is a quinone + NADH + 5 H(+)(in) = a quinol + NAD(+) + 4 H(+)(out). Functionally, NDH-1 shuttles electrons from NADH, via FMN and iron-sulfur (Fe-S) centers, to quinones in the respiratory chain. The immediate electron acceptor for the enzyme in this species is believed to be a menaquinone. Couples the redox reaction to proton translocation (for every two electrons transferred, four hydrogen ions are translocated across the cytoplasmic membrane), and thus conserves the redox energy in a proton gradient. The polypeptide is NADH-quinone oxidoreductase subunit A (Bacillus cereus (strain ATCC 14579 / DSM 31 / CCUG 7414 / JCM 2152 / NBRC 15305 / NCIMB 9373 / NCTC 2599 / NRRL B-3711)).